The primary structure comprises 241 residues: Uracil-DNA glycosylase (241 aa).

Aspartate 73 (proton acceptor) is an active-site residue.

This sequence belongs to the uracil-DNA glycosylase (UDG) superfamily. UNG family.

It localises to the cytoplasm. The enzyme catalyses Hydrolyzes single-stranded DNA or mismatched double-stranded DNA and polynucleotides, releasing free uracil.. Functionally, excises uracil residues from the DNA which can arise as a result of misincorporation of dUMP residues by DNA polymerase or due to deamination of cytosine. In Agrobacterium fabrum (strain C58 / ATCC 33970) (Agrobacterium tumefaciens (strain C58)), this protein is Uracil-DNA glycosylase.